A 627-amino-acid chain; its full sequence is MAHVGNYSRNGYYPYYNNKFCGNFTELMYLIIVEKNRSDGYSNIKKHLVDNIETINYRNEKGWTALMIACAMCDKWSSFKTIRLLLKKGADVHIENNKGRTVLSLMVNIITENKFNIMDLLIDKGADINSQDNKNKTPLIHACKKELDDTYLHACYVLGKSVDPNLEKNDSKTVRYLLDKGADPNIEEHYGKTVLFYAARMKNQDKAYEISKTLIERGGNANHTNHYAETVLIYLCISCSHYSCELIQLLLDNGVDINHQNRIGFTALMCACINIKNPSNFETIKFMLDKGANINLKNNDGFTAFMNIFGNNYFDYIVPVIQIMLDYGADINDKNNNNVTVLMMAVKFAKNDKNMTVINFLLDKGADLEIRNDYDWTALFYACRYSNSSGNNDAVKLLLDYGANVNVNTLLGHTPLIIACQYADNESNIDTVKLLLEYGANPNLTNLDKNTALSVAITWLSKNRYEVVKLLLYYHADSNTYLYLNSEGTVREYNLLVWIVKNIKCNKLDLLMLLIEHGANYSDIKGYIFQENLDNGDIEKFMKFTNIMENIKLVKKSIIDCIPKRVPEIIFNTNSMISQLLSLKWKAYSSDYKDLITLKDLDIIDYLGVYDIDSLYDRIIDITKYAY.

ANK repeat units lie at residues 61-94 (KGWTALMIACAMCDKWSSFKTIRLLLKKGADVHI), 98-130 (KGRTVLSLMVNIITENKFNIMDLLIDKGADINS), 153-186 (HACYVLGKSVDPNLEKNDSKTVRYLLDKGADPNI), 190-223 (YGKTVLFYAARMKNQDKAYEISKTLIERGGNANH), 228-259 (AETVLIYLCISCSHYSCELIQLLLDNGVDINH), 263-296 (IGFTALMCACINIKNPSNFETIKFMLDKGANINL), 300-333 (DGFTAFMNIFGNNYFDYIVPVIQIMLDYGADIND), 337-370 (NNVTVLMMAVKFAKNDKNMTVINFLLDKGADLEI), 374-407 (YDWTALFYACRYSNSSGNNDAVKLLLDYGANVNV), 411-444 (LGHTPLIIACQYADNESNIDTVKLLLEYGANPNL), 448-480 (DKNTALSVAITWLSKNRYEVVKLLLYYHADSNT), and 491-523 (REYNLLVWIVKNIKCNKLDLLMLLIEHGANYSD).

The polypeptide is Putative ankyrin repeat protein L122 (Acanthamoeba polyphaga (Amoeba)).